A 470-amino-acid chain; its full sequence is Cysteine--tRNA ligase (470 aa).

Zn(2+) is bound at residue cysteine 27. Positions proline 29–asparagine 39 match the 'HIGH' region motif. Zn(2+) is bound by residues cysteine 207, histidine 232, and glutamate 236. The 'KMSKS' region motif lies at lysine 264–serine 268. Residue lysine 267 coordinates ATP.

This sequence belongs to the class-I aminoacyl-tRNA synthetase family. As to quaternary structure, monomer. Zn(2+) serves as cofactor.

The protein localises to the cytoplasm. It carries out the reaction tRNA(Cys) + L-cysteine + ATP = L-cysteinyl-tRNA(Cys) + AMP + diphosphate. The polypeptide is Cysteine--tRNA ligase (Lachnoclostridium phytofermentans (strain ATCC 700394 / DSM 18823 / ISDg) (Clostridium phytofermentans)).